A 147-amino-acid polypeptide reads, in one-letter code: Interleukin-4 (147 aa).

A signal peptide spans 1–19 (MGLRPQLAAILLCLLACTG). 4 N-linked (GlcNAc...) asparagine glycosylation sites follow: Asn20, Asn61, Asn90, and Asn117. Disulfide bonds link Cys47/Cys87 and Cys69/Cys114.

The protein belongs to the IL-4/IL-13 family.

The protein localises to the secreted. Its function is as follows. Participates in at least several B-cell activation processes as well as of other cell types. It is a costimulator of DNA-synthesis. It induces the expression of class II MHC molecules on resting B-cells. It enhances both secretion and cell surface expression of IgE and IgG1. It also regulates the expression of the low affinity Fc receptor for IgE (CD23) on both lymphocytes and monocytes. Positively regulates IL31RA expression in macrophages. Stimulates autophagy in dendritic cells by interfering with mTORC1 signaling and through the induction of RUFY4. This chain is Interleukin-4 (IL4), found in Mesocricetus auratus (Golden hamster).